We begin with the raw amino-acid sequence, 87 residues long: Probable Fe(2+)-trafficking protein (87 aa).

It belongs to the Fe(2+)-trafficking protein family.

Could be a mediator in iron transactions between iron acquisition and iron-requiring processes, such as synthesis and/or repair of Fe-S clusters in biosynthetic enzymes. In Francisella tularensis subsp. holarctica (strain FTNF002-00 / FTA), this protein is Probable Fe(2+)-trafficking protein.